The primary structure comprises 365 residues: P43 5S RNA-binding protein (365 aa).

C2H2-type zinc fingers lie at residues 15-39 (FRCP…MAGH), 45-69 (WKCG…MKRH), 75-100 (HSCP…LYKH), 106-130 (LKCS…VSEH), 136-160 (SVCD…HRRH), 163-187 (YRCS…LKKH), 191-213 (LQCA…KATH), 220-245 (LPCP…RKVH), and 251-275 (HRCP…LVVH).

In terms of assembly, the 42S RNP particle comprises four subunits each of which contains one molecule of 5S RNA, three molecules of tRNA, two molecules of p50 (EF1-alpha) and one molecule of the 5S RNA binding protein 43.

In terms of biological role, p43 is a 5S RNA binding protein which is a major constituent of oocytes and comprises part of a 42S ribonucleoprotein storage particle. This is P43 5S RNA-binding protein from Xenopus borealis (Kenyan clawed frog).